The chain runs to 348 residues: Protein RecA (348 aa).

66-73 (GPESSGKT) is an ATP binding site.

The protein belongs to the RecA family.

The protein localises to the cytoplasm. Can catalyze the hydrolysis of ATP in the presence of single-stranded DNA, the ATP-dependent uptake of single-stranded DNA by duplex DNA, and the ATP-dependent hybridization of homologous single-stranded DNAs. It interacts with LexA causing its activation and leading to its autocatalytic cleavage. The sequence is that of Protein RecA from Neisseria gonorrhoeae (strain NCCP11945).